The following is a 207-amino-acid chain: MERKERLRAGIAAMGLDISETAQDRLLAYVDLLKKWNKTYNLTALRDEEKMIVHHLLDSLTLLPHIEGVQTMLDVGSGGGQPGIPAAVCRPDVQITLLDANTKKTAFLQQAVIELGLDNVRVVSGRVEAVSDVRADVVTSRAFAELADFVSWTAHLLKDGGYWAAMKGVYPQGEIGRLPQDVCVEKVQRLDVPGLDAERHIVILSKR.

S-adenosyl-L-methionine contacts are provided by residues Gly-76, Gln-81, 127–128 (VE), and Arg-141.

Belongs to the methyltransferase superfamily. RNA methyltransferase RsmG family.

It is found in the cytoplasm. It carries out the reaction guanosine(527) in 16S rRNA + S-adenosyl-L-methionine = N(7)-methylguanosine(527) in 16S rRNA + S-adenosyl-L-homocysteine. Its function is as follows. Specifically methylates the N7 position of guanine in position 527 of 16S rRNA. This is Ribosomal RNA small subunit methyltransferase G from Neisseria meningitidis serogroup A / serotype 4A (strain DSM 15465 / Z2491).